The sequence spans 142 residues: Hemoglobin subunit alpha (142 aa).

Positions 2 to 142 constitute a Globin domain; sequence VLSAADKSNV…VGTVLTSKYR (141 aa). Ser-4 carries the phosphoserine modification. N6-succinyllysine occurs at positions 8 and 12. Position 17 is an N6-acetyllysine; alternate (Lys-17). An N6-succinyllysine; alternate modification is found at Lys-17. A Phosphotyrosine modification is found at Tyr-25. Phosphoserine is present on Ser-36. The residue at position 41 (Lys-41) is an N6-succinyllysine. Ser-50 carries the post-translational modification Phosphoserine. His-59 contributes to the O2 binding site. Residue His-88 coordinates heme b. Position 103 is a phosphoserine (Ser-103). Thr-109 is subject to Phosphothreonine. Ser-125 and Ser-132 each carry phosphoserine. Phosphothreonine occurs at positions 135 and 138. The residue at position 139 (Ser-139) is a Phosphoserine.

This sequence belongs to the globin family. In terms of assembly, heterotetramer of two alpha chains and two beta chains. In terms of tissue distribution, red blood cells.

Involved in oxygen transport from the lung to the various peripheral tissues. Its function is as follows. Hemopressin acts as an antagonist peptide of the cannabinoid receptor CNR1. Hemopressin-binding efficiently blocks cannabinoid receptor CNR1 and subsequent signaling. The chain is Hemoglobin subunit alpha (HBA) from Pantholops hodgsonii (Chiru).